A 202-amino-acid chain; its full sequence is Mevalonate-3-phosphate 5-kinase (202 aa).

It carries out the reaction (R)-3-phosphomevalonate + ATP = (R)-3,5-bisphosphomevalonate + ADP + H(+). It participates in isoprenoid biosynthesis; isopentenyl diphosphate biosynthesis via mevalonate pathway. Phosphorylates mevalonate 3-phosphate to form mevalonate 3,5-bisphosphate. Functions in an alternative mevalonate pathway, only present in extreme acidophiles of the Thermoplasmatales order, which passes through mevalonate 3-phosphate rather than mevalonate 5-phosphate. This Thermoplasma acidophilum (strain ATCC 25905 / DSM 1728 / JCM 9062 / NBRC 15155 / AMRC-C165) protein is Mevalonate-3-phosphate 5-kinase.